The primary structure comprises 628 residues: Rac GTPase-activating protein 1 (628 aa).

M1 carries the post-translational modification N-acetylmethionine. The stretch at 33-110 (QVVKDFEDFR…IQLIRDILMC (78 aa)) forms a coiled coil. The tract at residues 107-286 (ILMCDTSGSI…GTPQNTGGMR (180 aa)) is interaction with SLC26A8. Phosphoserine; by PLK1 is present on S150. S155 carries the post-translational modification Phosphoserine. A Phosphoserine; by PLK1 modification is found at S158. T162 carries the post-translational modification Phosphothreonine. A phosphoserine; by PLK1 mark is found at S165 and S171. Residues 179–201 (KKREKRRSNSRQFIDGPPGPVKK) are disordered. Residues S204, S207, and S215 each carry the phosphoserine modification. The disordered stretch occupies residues 242–284 (SWTRSRGKSGPLQPVNSDSALNSRPLEPRTDTDNLGTPQNTGG). A Glycyl lysine isopeptide (Lys-Gly) (interchain with G-Cter in SUMO2) cross-link involves residue K249. S258 is modified (phosphoserine). The segment covering 274-283 (DNLGTPQNTG) has biased composition (polar residues). The segment at 287 to 336 (LHDFVSKTVIKPESCVPCGKRIKFGKLSLKCRDCRLVSHPECRDRCPLPC) adopts a Phorbol-ester/DAG-type zinc-finger fold. T343 carries the post-translational modification Phosphothreonine. The 191-residue stretch at 350–540 (GMLADFVSQA…RLLSLPLEYW (191 aa)) folds into the Rho-GAP domain. A Phosphoserine; by AURKB modification is found at S388. Residue K405 forms a Glycyl lysine isopeptide (Lys-Gly) (interchain with G-Cter in SUMO2) linkage. At S411 the chain carries Phosphoserine; by AURKB. A phosphothreonine mark is found at T564, T577, T585, and T602.

In terms of assembly, heterotetramer of two molecules each of RACGAP1 and KIF23. Found in the centralspindlin complex. Associates with alpha-, beta- and gamma-tubulin and microtubules. Interacts via its Rho-GAP domain with RND2. Associates with AURKB during M phase. Interacts via its Rho-GAP domain and basic region with PRC1. The interaction with PRC1 inhibits its GAP activity towards CDC42 in vitro, which may be required for maintaining normal spindle morphology. Interacts with SLC26A8 via its N-terminus. Interacts with ECT2; the interaction is direct, occurs at anaphase and during cytokinesis in a microtubule-dependent manner, is enhanced by phosphorylation by PLK1 and phosphorylation at Ser-165 plays a major role in mediating binding. Interacts with RAB11FIP3; the interaction occurs at late telophase. Interacts with KIF23; the interaction is direct. In terms of processing, phosphorylated at multiple sites in the midbody during cytokinesis. Phosphorylation by AURKB on Ser-388 at the midbody is, at least in part, responsible for exerting its latent GAP activity towards RhoA. Phosphorylation on multiple serine residues by PLK1 enhances its association with ECT2 and is critical for cleavage furrow formation. Phosphorylation on Ser-165 plays a major role in mediating interaction with ECT2. Phosphorylation on Ser-158 does not appear to contribute to binding to ECT2. Highly expressed in testis, thymus and spleen and weakly expressed in brain, heart, skeletal muscle and kidney. In testis, expression is restricted to germ cells with the highest levels of expression found in spermatocytes. Not detected in adult liver. Also expressed in fetal liver and in several hematopoietic cell lines.

It is found in the nucleus. The protein localises to the cytoplasm. Its subcellular location is the cytoskeleton. The protein resides in the spindle. It localises to the cytoplasmic vesicle. It is found in the secretory vesicle. The protein localises to the acrosome. Its subcellular location is the cleavage furrow. The protein resides in the midbody. It localises to the midbody ring. It is found in the cell membrane. Functionally, component of the centralspindlin complex that serves as a microtubule-dependent and Rho-mediated signaling required for the myosin contractile ring formation during the cell cycle cytokinesis. Required for proper attachment of the midbody to the cell membrane during cytokinesis. Sequentially binds to ECT2 and RAB11FIP3 which regulates cleavage furrow ingression and abscission during cytokinesis. Plays key roles in controlling cell growth and differentiation of hematopoietic cells through mechanisms other than regulating Rac GTPase activity. Has a critical role in erythropoiesis. Also involved in the regulation of growth-related processes in adipocytes and myoblasts. May be involved in regulating spermatogenesis and in the RACGAP1 pathway in neuronal proliferation. Shows strong GAP (GTPase activation) activity towards CDC42 and RAC1 and less towards RHOA. Essential for the early stages of embryogenesis. May play a role in regulating cortical activity through RHOA during cytokinesis. May participate in the regulation of sulfate transport in male germ cells. This chain is Rac GTPase-activating protein 1, found in Mus musculus (Mouse).